Reading from the N-terminus, the 737-residue chain is MLKYALHSGGMPRNRLLRQLSAYIFRRSYSSNIRNIGILAHIDAGKTTTTERMLFYSGKTRSLGEVHRGNTVTDYLTQERERGITICSSAVTFPWSGNRINLLDTPGHIDFTMEVEQSLYAVDGVVVVLDGTAGVEAQTVTVWTQADKHKLPRLAFVNKMDRPDADFDKCVNDLRTKLETQPVCIQYPSKNQDGLLAINDVITLEQLTWQPKDLGRSYSKTKLEPSDDLRQLQEKRNELIDQLSGLDDELADVVISTESFDNVSNALIERALRRATCQQKVVPVLLGSAYKNVGIQRLMDAVNTYLPAPEERNQIYDCFGNEVAGKVFKIVHDKQRGPLTLVRILRGEIKRGMRLICSRGQAEVVSKLYEPLADEYREVGAVQSGDVVICAGLKSTVTGDLLTSSQTALRNAQKRLKQSQGTVSADEDEELDTDELFGIDRQIPDAVYFCSIEPPSVSSQTAMEQALRQLQREDPSLRVSYDSVTGQTVLGGMGELHMDIIKSRILSEYKIDVDLGPLQIAYKETIESPSLTTLSVEKEIAGSKQNVSLTLEVVKDHDELFSLDKSPENLSNLNTLRPRTLQVIRKGSVSALERGPRVGGQVVDTQIRLHNAIIGRGTADSFVMATAAQCVQKLLSTSGTRLLEPIMALQIVAPSERISGIMADLSRRRALINDVLPKGERNKMILVNAPLAELSGYSSALRTISSGTASMTMQPSGFSGMNAVDESLAERRVQGLE.

The N-terminal 29 residues, 1-29 (MLKYALHSGGMPRNRLLRQLSAYIFRRSY), are a transit peptide targeting the mitochondrion. A tr-type G domain is found at 31–310 (SNIRNIGILA…AVNTYLPAPE (280 aa)). Residues 40 to 47 (AHIDAGKT), 104 to 108 (DTPGH), and 158 to 161 (NKMD) each bind GTP.

This sequence belongs to the TRAFAC class translation factor GTPase superfamily. Classic translation factor GTPase family. EF-G/EF-2 subfamily.

The protein localises to the mitochondrion. In terms of biological role, mitochondrial GTPase that mediates the disassembly of ribosomes from messenger RNA at the termination of mitochondrial protein biosynthesis. Not involved in the GTP-dependent ribosomal translocation step during translation elongation. The protein is Ribosome-releasing factor 2, mitochondrial of Drosophila persimilis (Fruit fly).